Reading from the N-terminus, the 373-residue chain is Enoyl-[acyl-carrier-protein] reductase, mitochondrial (373 aa).

A mitochondrion-targeting transit peptide spans 1–53; it reads MWVCGALCRTRAPAQLGQRLLPESRRRRPASASFSASAEPSRVRALVYGHHGD. An N6-acetyllysine; alternate modification is found at Lys61. N6-succinyllysine; alternate is present on Lys61. Catalysis depends on Tyr94, which acts as the Proton donor. NADP(+) contacts are provided by residues Asn167, 193 to 196, and 216 to 218; these read NSGV and RDT. N6-acetyllysine; alternate is present on residues Lys252 and Lys267. N6-succinyllysine; alternate occurs at positions 252 and 267. Residues 285–288 and 310–312 contribute to the NADP(+) site; these read YGGM and FWL. Lys316 carries the post-translational modification N6-succinyllysine. Position 368 (Lys368) interacts with NADP(+).

The protein belongs to the zinc-containing alcohol dehydrogenase family. Quinone oxidoreductase subfamily. In terms of assembly, homodimer.

It localises to the mitochondrion. It catalyses the reaction a 2,3-saturated acyl-[ACP] + NADP(+) = a (2E)-enoyl-[ACP] + NADPH + H(+). It carries out the reaction (2E)-butenoyl-[ACP] + NADPH + H(+) = butanoyl-[ACP] + NADP(+). The enzyme catalyses (2E)-hexenoyl-[ACP] + NADPH + H(+) = hexanoyl-[ACP] + NADP(+). The catalysed reaction is (2E)-octenoyl-[ACP] + NADPH + H(+) = octanoyl-[ACP] + NADP(+). It catalyses the reaction (2E)-decenoyl-[ACP] + NADPH + H(+) = decanoyl-[ACP] + NADP(+). It carries out the reaction (2E)-dodecenoyl-[ACP] + NADPH + H(+) = dodecanoyl-[ACP] + NADP(+). The enzyme catalyses (2E)-tetradecenoyl-[ACP] + NADPH + H(+) = tetradecanoyl-[ACP] + NADP(+). The catalysed reaction is (2E)-hexadecenoyl-[ACP] + NADPH + H(+) = hexadecanoyl-[ACP] + NADP(+). Functionally, catalyzes the NADPH-dependent reduction of trans-2-enoyl thioesters in mitochondrial fatty acid synthesis (fatty acid synthesis type II). Fatty acid chain elongation in mitochondria uses acyl carrier protein (ACP) as an acyl group carrier, but the enzyme accepts both ACP and CoA thioesters as substrates in vitro. Displays a preference for medium-chain over short- and long-chain substrates. May provide the octanoyl chain used for lipoic acid biosynthesis, regulating protein lipoylation and mitochondrial respiratory activity particularly in Purkinje cells. Involved in iron homeostasis; affecting Fe-S cluster assembly and ceramide metabolism. Required for proper morphology and bioenergetic functions of mitochondria. Required for maintenance of neurons. This chain is Enoyl-[acyl-carrier-protein] reductase, mitochondrial (MECR), found in Bos taurus (Bovine).